A 346-amino-acid polypeptide reads, in one-letter code: Signal recognition particle receptor FtsY (346 aa).

GTP-binding positions include 143–150, 225–229, and 289–292; these read GVNGVGKT, DTSGR, and TKMD.

It belongs to the GTP-binding SRP family. FtsY subfamily. Part of the signal recognition particle protein translocation system, which is composed of SRP and FtsY.

It is found in the cell membrane. Its subcellular location is the cytoplasm. The catalysed reaction is GTP + H2O = GDP + phosphate + H(+). In terms of biological role, involved in targeting and insertion of nascent membrane proteins into the cytoplasmic membrane. Acts as a receptor for the complex formed by the signal recognition particle (SRP) and the ribosome-nascent chain (RNC). This Mycoplasma genitalium (strain ATCC 33530 / DSM 19775 / NCTC 10195 / G37) (Mycoplasmoides genitalium) protein is Signal recognition particle receptor FtsY.